We begin with the raw amino-acid sequence, 460 residues long: 3-isopropylmalate dehydratase large subunit (460 aa).

3 residues coordinate [4Fe-4S] cluster: Cys338, Cys398, and Cys401.

It belongs to the aconitase/IPM isomerase family. LeuC type 1 subfamily. As to quaternary structure, heterodimer of LeuC and LeuD. [4Fe-4S] cluster serves as cofactor.

The catalysed reaction is (2R,3S)-3-isopropylmalate = (2S)-2-isopropylmalate. It participates in amino-acid biosynthesis; L-leucine biosynthesis; L-leucine from 3-methyl-2-oxobutanoate: step 2/4. Catalyzes the isomerization between 2-isopropylmalate and 3-isopropylmalate, via the formation of 2-isopropylmaleate. The protein is 3-isopropylmalate dehydratase large subunit of Streptococcus gordonii (strain Challis / ATCC 35105 / BCRC 15272 / CH1 / DL1 / V288).